A 283-amino-acid polypeptide reads, in one-letter code: Small ribosomal subunit protein uS2B (283 aa).

The disordered stretch occupies residues G254–A283. Positions W267 to A283 are enriched in polar residues.

It belongs to the universal ribosomal protein uS2 family. Component of the small ribosomal subunit. Mature ribosomes consist of a small (40S) and a large (60S) subunit. The 40S subunit contains about 33 different proteins and 1 molecule of RNA (18S). The 60S subunit contains about 49 different proteins and 3 molecules of RNA (25S, 5.8S and 5S). Interacts with rps21.

The protein localises to the cytoplasm. Required for the assembly and/or stability of the 40S ribosomal subunit. Required for the processing of the 20S rRNA-precursor to mature 18S rRNA in a late step of the maturation of 40S ribosomal subunits. The polypeptide is Small ribosomal subunit protein uS2B (rps0b) (Schizosaccharomyces japonicus (strain yFS275 / FY16936) (Fission yeast)).